The chain runs to 106 residues: UPF0145 protein (106 aa).

The protein belongs to the UPF0145 family.

This Listeria grayi (Listeria murrayi) protein is UPF0145 protein.